Reading from the N-terminus, the 334-residue chain is GTPase Obg (334 aa).

One can recognise an Obg domain in the interval 1-159; it reads MRFVDEVVIK…KEVRLELNLL (159 aa). An OBG-type G domain is found at 160-331; sequence ADVALLGLPN…LAKKLNEFLQ (172 aa). GTP is bound by residues 166 to 173, 191 to 195, 212 to 215, 282 to 285, and 312 to 314; these read GLPNAGKS, FTTMY, DIPG, NKID, and SAA. Residues S173 and T193 each coordinate Mg(2+).

The protein belongs to the TRAFAC class OBG-HflX-like GTPase superfamily. OBG GTPase family. In terms of assembly, monomer. Requires Mg(2+) as cofactor.

It localises to the cytoplasm. Its function is as follows. An essential GTPase which binds GTP, GDP and possibly (p)ppGpp with moderate affinity, with high nucleotide exchange rates and a fairly low GTP hydrolysis rate. Plays a role in control of the cell cycle, stress response, ribosome biogenesis and in those bacteria that undergo differentiation, in morphogenesis control. The protein is GTPase Obg of Francisella tularensis subsp. mediasiatica (strain FSC147).